Reading from the N-terminus, the 637-residue chain is BUD13 homolog (637 aa).

The interval 18–53 (SGTDAGLEGGPEAGRKRRKKRPKPGGAGGKGMRIVD) is disordered. Residue Lys65 forms a Glycyl lysine isopeptide (Lys-Gly) (interchain with G-Cter in SUMO2) linkage. Positions 104-470 (LLGGHGEDGH…KKQDQDTTDL (367 aa)) are disordered. Basic and acidic residues predominate over residues 108 to 119 (HGEDGHFHHDDQ). Thr131 carries the post-translational modification Phosphothreonine. The residue at position 135 (Ser135) is a Phosphoserine. Thr144 carries the phosphothreonine modification. Ser148 bears the Phosphoserine mark. Thr157 carries the phosphothreonine modification. Ser161 bears the Phosphoserine mark. Thr170 carries the phosphothreonine modification. Phosphoserine is present on Ser174. At Thr183 the chain carries Phosphothreonine. Ser187 carries the phosphoserine modification. Phosphothreonine is present on residues Thr196 and Thr209. Position 213 is a phosphoserine (Ser213). Residue Thr222 is modified to Phosphothreonine. Residues Ser226, Ser238, Ser259, Ser264, Ser272, Ser284, Ser285, and Ser297 each carry the phosphoserine modification. Residues 260-275 (LGTSSPRQTHNHSPTA) are compositionally biased toward polar residues. Positions 295–315 (HESPDLELHKAKSSKAAERAP) are enriched in basic and acidic residues. Positions 318-335 (AASQSGLGPSHPSLSTNS) are enriched in polar residues. 2 positions are modified to phosphoserine: Ser341 and Ser344. Residues 353 to 362 (AHFEAKKQLD) are compositionally biased toward basic and acidic residues. Phosphoserine occurs at positions 371, 373, 376, 410, and 426. A compositionally biased stretch (basic residues) spans 430–439 (RSPRPGKKTA). A compositionally biased stretch (basic and acidic residues) spans 453-465 (VQREHQELKKQDQ). Residues 490-538 (NLKLERLEQRRKAEKDSERDELYAQWGKGLAQSRQQQQNVEDAMKEMQK) adopt a coiled-coil conformation. Tyr512 carries the post-translational modification Phosphotyrosine. Residues 553–595 (LREQEREGDPMANFIKKNKAKENKNKKVKPRYSGPAPPPNRFN) are disordered. Phosphoserine is present on Ser585.

The protein belongs to the CWC26 family. Part of the activated spliceosome B/catalytic step 1 spliceosome, one of the forms of the spliceosome which has a well-formed active site but still cannot catalyze the branching reaction and is composed of at least 52 proteins, the U2, U5 and U6 snRNAs and the pre-mRNA. Component of the minor spliceosome, which splices U12-type introns.

It localises to the nucleus. In terms of biological role, involved in pre-mRNA splicing as component of the activated spliceosome. As a component of the minor spliceosome, involved in the splicing of U12-type introns in pre-mRNAs. This is BUD13 homolog (Bud13) from Mus musculus (Mouse).